The sequence spans 168 residues: G/U mismatch-specific DNA glycosylase (168 aa).

Belongs to the uracil-DNA glycosylase (UDG) superfamily. TDG/mug family. As to quaternary structure, binds DNA as a monomer.

The protein resides in the cytoplasm. The enzyme catalyses Specifically hydrolyzes mismatched double-stranded DNA and polynucleotides, releasing free uracil.. Its function is as follows. Excises ethenocytosine and uracil, which can arise by alkylation or deamination of cytosine, respectively, from the corresponding mispairs with guanine in ds-DNA. It is capable of hydrolyzing the carbon-nitrogen bond between the sugar-phosphate backbone of the DNA and the mispaired base. The complementary strand guanine functions in substrate recognition. Required for DNA damage lesion repair in stationary-phase cells. In Klebsiella pneumoniae (strain 342), this protein is G/U mismatch-specific DNA glycosylase.